We begin with the raw amino-acid sequence, 315 residues long: Ribosomal RNA small subunit methyltransferase H (315 aa).

Residues Gly34–His36, Asp53, Asp100, and His107 each bind S-adenosyl-L-methionine.

It belongs to the methyltransferase superfamily. RsmH family.

It localises to the cytoplasm. It catalyses the reaction cytidine(1402) in 16S rRNA + S-adenosyl-L-methionine = N(4)-methylcytidine(1402) in 16S rRNA + S-adenosyl-L-homocysteine + H(+). Its function is as follows. Specifically methylates the N4 position of cytidine in position 1402 (C1402) of 16S rRNA. This is Ribosomal RNA small subunit methyltransferase H from Treponema denticola (strain ATCC 35405 / DSM 14222 / CIP 103919 / JCM 8153 / KCTC 15104).